The primary structure comprises 471 residues: Probable multidrug-efflux transporter MT1670 (471 aa).

Transmembrane regions (helical) follow at residues 23-43, 55-75, 91-111, 116-136, 146-166, 174-194, 213-233, 237-257, 279-299, 308-328, 337-357, 366-386, 410-430, and 438-458; these read IVLAGGVALYATNEFLTISLL, LYAWVTTLYLVGSVVAATTVN, LAVFGLASLVCAAAPSMQILV, LQGIAGGLLAGLGYALINSTL, ALVSAMWGVATLIGPATGGLF, WAFGVMTLLTALMAMLVPVAL, VPVWSLLLMGAAALAISVAAL, LVQTAGLLAAAALLVAVFVVV, IYLTMSVQMIAAMVDTYVPLF, PVAAGFLGAALAVGWTVGEVA, VIGHVVAAAPLVMASGLALGA, VGIIALWALALLIIGTGIGIA, AINVVQLISGAFGAGLAGVVV, and VAAARGLYMAFTVLAAAGVIA.

The protein belongs to the major facilitator superfamily.

The protein resides in the cell membrane. Functionally, could be involved in fluoroquinolones efflux. This chain is Probable multidrug-efflux transporter MT1670, found in Mycobacterium tuberculosis (strain CDC 1551 / Oshkosh).